Consider the following 638-residue polypeptide: Mediator of RNA polymerase II transcription subunit 17 (638 aa).

Positions 1–21 (MSDSFNLPLRPLTEKRERPDP) are disordered.

The protein belongs to the Mediator complex subunit 17 family. As to quaternary structure, component of the Mediator complex.

Its subcellular location is the nucleus. In terms of biological role, component of the Mediator complex, a coactivator involved in the regulated transcription of nearly all RNA polymerase II-dependent genes. Mediator functions as a bridge to convey information from gene-specific regulatory proteins to the basal RNA polymerase II transcription machinery. Mediator is recruited to promoters by direct interactions with regulatory proteins and serves as a scaffold for the assembly of a functional preinitiation complex with RNA polymerase II and the general transcription factors. The chain is Mediator of RNA polymerase II transcription subunit 17 (srb4) from Aspergillus oryzae (strain ATCC 42149 / RIB 40) (Yellow koji mold).